The primary structure comprises 752 residues: Palmitoyltransferase AKR1 (752 aa).

2 disordered regions span residues 1-21 (MTAE…KSDY) and 49-68 (ASSE…LGSV). The Cytoplasmic segment spans residues 1–318 (MTAEEVDKES…FPLPQYFSAS (318 aa)). Composition is skewed to basic and acidic residues over residues 9-21 (ESDP…KSDY) and 51-68 (SELK…LGSV). 6 ANK repeats span residues 72–102 (PILE…DLSN), 108–137 (ERVS…EVNF), 142–171 (LDAT…DPNI), 175–208 (QGYN…DVDQ), 212–241 (HQRT…DVKN), and 245–274 (AGFT…DFFQ). A helical membrane pass occupies residues 319-339 (TGKMLTFFLPWVLIPLVFYIF). The Lumenal portion of the chain corresponds to 340-341 (SK). A helical transmembrane segment spans residues 342–362 (ITFFIALLINTIVLVISGLVL). At 363–380 (SRLVVPSYLLSKRHPILN) the chain is on the cytoplasmic side. The helical transmembrane segment at 381–401 (SPLLAGILSGTIAIAFFIWFT) threads the bilayer. Topologically, residues 402-412 (KISILTFTEKP) are lumenal. A helical transmembrane segment spans residues 413 to 433 (VGNIIMLGFFIGLITLFIGLM). Residues 434-509 (KSDPGYIPGT…YNQIGLLNHK (76 aa)) are Cytoplasmic-facing. The DHHC domain occupies 466–516 (HFCVHTWIRIPLRSKYDRDSACLISAFDHFCPWVYNQIGLLNHKLFYMFVV). The S-palmitoyl cysteine intermediate role is filled by cysteine 496. Residues 510-530 (LFYMFVVLLEISVWWFLPLMM) traverse the membrane as a helical segment. Residues 531 to 567 (EYFDELEDYLENRKGKHFGDCHFLGDEDLCFGLHHDT) are Lumenal-facing. Residues 568-588 (FNFLLLCWVIFQAFWVLCLIA) form a helical membrane-spanning segment. At 589–752 (VQTVQMLKGV…TLPNATEELV (164 aa)) the chain is on the cytoplasmic side.

Belongs to the DHHC palmitoyltransferase family. AKR/ZDHHC17 subfamily.

The protein resides in the early endosome membrane. The protein localises to the golgi apparatus membrane. The catalysed reaction is L-cysteinyl-[protein] + hexadecanoyl-CoA = S-hexadecanoyl-L-cysteinyl-[protein] + CoA. Palmitoyltransferase specific for casein kinase 1. This chain is Palmitoyltransferase AKR1 (AKR1), found in Kluyveromyces lactis (strain ATCC 8585 / CBS 2359 / DSM 70799 / NBRC 1267 / NRRL Y-1140 / WM37) (Yeast).